Consider the following 120-residue polypeptide: Dihydroneopterin aldolase (120 aa).

Substrate-binding positions include glutamate 21, tyrosine 53, and 72–73; that span reads VE. Lysine 99 serves as the catalytic Proton donor/acceptor.

Belongs to the DHNA family.

The enzyme catalyses 7,8-dihydroneopterin = 6-hydroxymethyl-7,8-dihydropterin + glycolaldehyde. It functions in the pathway cofactor biosynthesis; tetrahydrofolate biosynthesis; 2-amino-4-hydroxy-6-hydroxymethyl-7,8-dihydropteridine diphosphate from 7,8-dihydroneopterin triphosphate: step 3/4. Catalyzes the conversion of 7,8-dihydroneopterin to 6-hydroxymethyl-7,8-dihydropterin. The sequence is that of Dihydroneopterin aldolase (folB) from Bacillus subtilis (strain 168).